Reading from the N-terminus, the 1173-residue chain is BRCA2-interacting transcriptional repressor EMSY (1173 aa).

The region spanning 16–100 (CKRILRKLEL…EWSIEGRRLV (85 aa)) is the ENT domain. Positions 149–177 (STTSTPPSASAPSSSSAAVKSPRPASPAS) are enriched in low complexity. 7 disordered regions span residues 149-179 (STTS…ASNV), 191-216 (KSVS…SSPV), 676-720 (NRSA…DAPP), 797-816 (SAEQ…ESDA), 905-998 (RVCE…GAQV), 1020-1046 (PRAP…EKPS), and 1139-1173 (DYTS…DQSQ). Residues 683–693 (TTSTHTSAAAA) are compositionally biased toward low complexity. Composition is skewed to low complexity over residues 911-921 (SSSSSSSSSSS) and 937-953 (SSSS…TPHT). 2 stretches are compositionally biased toward polar residues: residues 961–976 (QAPT…TQLS) and 989–998 (SSKTSSGAQV). Low complexity predominate over residues 1025–1040 (SSSSSSEAALKLQAES). Positions 1148-1159 (EQAMEQEVDSSN) are enriched in acidic residues.

Homodimer.

It is found in the nucleus. In terms of biological role, regulator which is able to repress transcription, possibly via its interaction with a multiprotein chromatin remodeling complex that modifies the chromatin. The protein is BRCA2-interacting transcriptional repressor EMSY of Danio rerio (Zebrafish).